Consider the following 272-residue polypeptide: Ethanolamine ammonia-lyase small subunit (272 aa).

Adenosylcob(III)alamin-binding residues include valine 161, glutamate 182, and cysteine 211.

This sequence belongs to the EutC family. As to quaternary structure, the basic unit is a heterodimer which dimerizes to form tetramers. The heterotetramers trimerize; 6 large subunits form a core ring with 6 small subunits projecting outwards. Adenosylcob(III)alamin is required as a cofactor.

It is found in the bacterial microcompartment. The catalysed reaction is ethanolamine = acetaldehyde + NH4(+). It participates in amine and polyamine degradation; ethanolamine degradation. Its function is as follows. Catalyzes the deamination of various vicinal amino-alcohols to oxo compounds. Allows this organism to utilize ethanolamine as the sole source of nitrogen and carbon in the presence of external vitamin B12. In Xanthomonas campestris pv. campestris (strain ATCC 33913 / DSM 3586 / NCPPB 528 / LMG 568 / P 25), this protein is Ethanolamine ammonia-lyase small subunit.